Reading from the N-terminus, the 137-residue chain is Large-conductance mechanosensitive channel (137 aa).

Transmembrane regions (helical) follow at residues 9–29, 32–52, 54–74, and 79–99; these read AFAV…GAAF, IVSS…IGGV, FGDL…VVLA, and IQSI…VKVI.

The protein belongs to the MscL family. As to quaternary structure, homopentamer.

The protein resides in the cell inner membrane. Channel that opens in response to stretch forces in the membrane lipid bilayer. May participate in the regulation of osmotic pressure changes within the cell. The sequence is that of Large-conductance mechanosensitive channel from Pseudomonas fluorescens (strain ATCC BAA-477 / NRRL B-23932 / Pf-5).